Consider the following 689-residue polypeptide: Solute carrier organic anion transporter family member 1B2 (689 aa).

The Cytoplasmic portion of the chain corresponds to 1–26 (MDQTQHPSKAAQPLRSEKTRHCDGFR). Residues 27 to 46 (IFLAALSFSYICKALGGVIM) form a helical membrane-spanning segment. The Extracellular portion of the chain corresponds to 47-65 (KSSITQIERRFDIPSSISG). Residues 66 to 86 (LIDGGFEIGNLLVIVFVSYFG) traverse the membrane as a helical segment. At 87–92 (SKLHRP) the chain is on the cytoplasmic side. A helical membrane pass occupies residues 93–117 (KLIGTGCFIMGIGSILTALPHFFMG). The Extracellular segment spans residues 118 to 163 (YYRYATENDISSLHNSTLTCLVNQTTSLTGTSPEIMEKGCEKGSNS). Residues Asn-132 and Asn-140 are each glycosylated (N-linked (GlcNAc...) asparagine). Residues 164–192 (YTWIYVLMGNMLRGIGETPIVPLGVSYID) form a helical membrane-spanning segment. Over 193–211 (DFAKEGNSSMYLGTLHTIA) the chain is Cytoplasmic. Residues 212–232 (MIGPILGFIMSSVFAKLYVDV) form a helical membrane-spanning segment. Residues 233–250 (GYVDLRSVRITPQDARWV) are Extracellular-facing. Residues 251-275 (GAWWLGFIVNGLLCIICSIPFFFLP) traverse the membrane as a helical segment. The Cytoplasmic portion of the chain corresponds to 276–326 (KIPKRSQKERKNSASLHVLKTDEDKNPVTNPTTQEKQAPANLTGFLWSLRS). A phosphoserine mark is found at Ser-288 and Ser-290. A helical transmembrane segment spans residues 327–348 (ILTNEQYVIFLILTLLQISSFI). Topologically, residues 349 to 368 (GSFTYLFKFIEQQFGQTASQ) are extracellular. The helical transmembrane segment at 369 to 392 (ANFLLGVITIPTMASGMFLGGYLI) threads the bilayer. Residues 393–396 (KRLK) lie on the Cytoplasmic side of the membrane. The helical transmembrane segment at 397–420 (LTLLGITKFVFFTTTMAYVFYLSY) threads the bilayer. The Extracellular segment spans residues 421–533 (FLLICENKAF…DKCKTKYYFY (113 aa)). Residues 448-505 (DVPLSYCNSDCICDKNQWEPVCGENGVTYISPCLAGCKSFRGDKKLMNIEFYDCSCVS) enclose the Kazal-like domain. Disulfide bonds link Cys-454–Cys-484, Cys-460–Cys-480, and Cys-469–Cys-503. Residue Asn-513 is glycosylated (N-linked (GlcNAc...) asparagine). Residues 534–556 (ITFQVIISFFTALGSTSLMLILI) form a helical membrane-spanning segment. The Cytoplasmic segment spans residues 557–565 (RSVQPELKS). The chain crosses the membrane as a helical span at residues 566–591 (LGMGFHSLVVRTLGGILAPVYYGALI). At 592–625 (DRTCMKWSVTSCGARGACRLYNSRLFGMIYVGLS) the chain is on the extracellular side. A helical transmembrane segment spans residues 626 to 643 (IALKTPILLLYVALIYVM). Residues 644–689 (KRKMKRNDNKILENGRKFTDEGNPEPVNNNGYSCVPSDEKNSETPL) lie on the Cytoplasmic side of the membrane. The tract at residues 658–689 (GRKFTDEGNPEPVNNNGYSCVPSDEKNSETPL) is disordered. Thr-662 carries the phosphothreonine modification. Position 680 is a phosphoserine (Ser-680). The segment covering 680–689 (SDEKNSETPL) has biased composition (basic and acidic residues).

Belongs to the organo anion transporter (TC 2.A.60) family. As to expression, liver specific.

The protein localises to the cell membrane. It catalyses the reaction estrone 3-sulfate(out) = estrone 3-sulfate(in). It carries out the reaction taurocholate(out) = taurocholate(in). The catalysed reaction is prostaglandin E2(out) = prostaglandin E2(in). The enzyme catalyses L-thyroxine(out) = L-thyroxine(in). Mediates the Na(+)-independent uptake of organic anions such as taurochlate, bromosulfophthalein and steroid conjugates (estrone 3-sulfate, 17-beta-glucuronosyl estradiol, dehydroepiandrosterone sulfate). Also transports prostaglandin E2 and L-thyroxine (T4). Shows a pH-sensitive substrate specificity which may be ascribed to the protonation state of the binding site and leads to a stimulation of substrate transport in an acidic microenvironment. Hydrogencarbonate/HCO3(-) acts as the probable counteranion that exchanges for organic anions. This chain is Solute carrier organic anion transporter family member 1B2 (Slco1b2), found in Mus musculus (Mouse).